The chain runs to 166 residues: Olee1-like protein (166 aa).

Positions 1–23 are cleaved as a signal peptide; it reads MAKSIIIQAPALCFLSLLGFAYS. Intrachain disulfides connect cysteine 35/cysteine 106, cysteine 38/cysteine 150, and cysteine 59/cysteine 94.

This sequence belongs to the Ole e I family.

Its subcellular location is the secreted. In Betula pendula (European white birch), this protein is Olee1-like protein.